Consider the following 158-residue polypeptide: pH 6 antigen (158 aa).

The signal sequence occupies residues methionine 1–alanine 26.

Forms a homomer composed of subunits assembled in a large structure.

Its subcellular location is the fimbrium. Fibrillar structure, part of fimbriae, necessary for full virulence. This chain is pH 6 antigen (psaA), found in Yersinia pestis.